A 505-amino-acid polypeptide reads, in one-letter code: Protein disulfide-isomerase (505 aa).

Residues 1–20 (MHKAQKFALGLLAAAAVATA) form the signal peptide. Thioredoxin domains follow at residues 21-128 (SDVV…QSLP) and 335-465 (FVAG…ENGK). Residues cysteine 50, cysteine 53, cysteine 385, and cysteine 388 each act as nucleophile in the active site. 2 disulfides stabilise this stretch: cysteine 50-cysteine 53 and cysteine 385-cysteine 388. The segment at 470-505 (ISEDAEETSSATETTTETATKSEEAAKETATEHDEL) is disordered. Low complexity predominate over residues 477–488 (TSSATETTTETA). The segment covering 489-505 (TKSEEAAKETATEHDEL) has biased composition (basic and acidic residues). The Prevents secretion from ER motif lies at 502–505 (HDEL).

It belongs to the protein disulfide isomerase family.

It localises to the endoplasmic reticulum lumen. It catalyses the reaction Catalyzes the rearrangement of -S-S- bonds in proteins.. Functionally, participates in the folding of proteins containing disulfide bonds, may be involved in glycosylation, prolyl hydroxylation and triglyceride transfer. This Humicola insolens (Soft-rot fungus) protein is Protein disulfide-isomerase.